We begin with the raw amino-acid sequence, 83 residues long: Cytochrome c6 (83 aa).

Heme c is bound by residues Cys-14, Cys-17, and His-18. Residue Lys-24 is modified to N6-methyllysine; partial. Met-59 contacts heme c.

It belongs to the cytochrome c family. PetJ subfamily. As to quaternary structure, monomer. In terms of processing, binds 1 heme c group covalently per subunit. Post-translationally, 50% of the molecules were found to be monomethylated at Lys-24.

The protein resides in the plastid. Its subcellular location is the chloroplast thylakoid lumen. Functions as an electron carrier between membrane-bound cytochrome b6-f and photosystem I in oxygenic photosynthesis. In Diacronema lutheri (Unicellular marine alga), this protein is Cytochrome c6 (petJ).